A 370-amino-acid polypeptide reads, in one-letter code: DNA replication and repair protein RecF (370 aa).

An ATP-binding site is contributed by 30 to 37 (GQNGMGKT).

Belongs to the RecF family.

It is found in the cytoplasm. The RecF protein is involved in DNA metabolism; it is required for DNA replication and normal SOS inducibility. RecF binds preferentially to single-stranded, linear DNA. It also seems to bind ATP. The protein is DNA replication and repair protein RecF of Bacteroides fragilis (strain ATCC 25285 / DSM 2151 / CCUG 4856 / JCM 11019 / LMG 10263 / NCTC 9343 / Onslow / VPI 2553 / EN-2).